The sequence spans 66 residues: Large ribosomal subunit protein bL31 (66 aa).

The Zn(2+) site is built by Cys-16, Cys-18, Cys-36, and Cys-39.

It belongs to the bacterial ribosomal protein bL31 family. Type A subfamily. As to quaternary structure, part of the 50S ribosomal subunit during exponential growth. Zn(2+) is required as a cofactor.

Its function is as follows. Binds the 23S rRNA. In terms of biological role, while neither of the L31 paralogs is essential, this protein seems to function as the main L31 protein. Has a lower affinity for 70S ribosomes than the non-zinc-containing paralog L31B (ytiA); is displaced by it to varying extents, even under zinc-replete conditions. This is Large ribosomal subunit protein bL31 (rpmE) from Bacillus subtilis (strain 168).